Here is a 339-residue protein sequence, read N- to C-terminus: DNA-directed RNA polymerase subunit alpha (339 aa).

The interval 1-237 (MENELMYMNW…EQMNVFINFD (237 aa)) is alpha N-terminal domain (alpha-NTD). Residues 256-339 (FNENLYRSVN…PPAEDNKEGE (84 aa)) form an alpha C-terminal domain (alpha-CTD) region.

Belongs to the RNA polymerase alpha chain family. In terms of assembly, homodimer. The RNAP catalytic core consists of 2 alpha, 1 beta, 1 beta' and 1 omega subunit. When a sigma factor is associated with the core the holoenzyme is formed, which can initiate transcription.

It carries out the reaction RNA(n) + a ribonucleoside 5'-triphosphate = RNA(n+1) + diphosphate. Its function is as follows. DNA-dependent RNA polymerase catalyzes the transcription of DNA into RNA using the four ribonucleoside triphosphates as substrates. The polypeptide is DNA-directed RNA polymerase subunit alpha (Desulfosudis oleivorans (strain DSM 6200 / JCM 39069 / Hxd3) (Desulfococcus oleovorans)).